Reading from the N-terminus, the 503-residue chain is ATP synthase subunit alpha (503 aa).

Residue 169 to 176 (GDRKTGKT) participates in ATP binding.

This sequence belongs to the ATPase alpha/beta chains family. As to quaternary structure, F-type ATPases have 2 components, CF(1) - the catalytic core - and CF(0) - the membrane proton channel. CF(1) has five subunits: alpha(3), beta(3), gamma(1), delta(1), epsilon(1). CF(0) has three main subunits: a(1), b(2) and c(9-12). The alpha and beta chains form an alternating ring which encloses part of the gamma chain. CF(1) is attached to CF(0) by a central stalk formed by the gamma and epsilon chains, while a peripheral stalk is formed by the delta and b chains.

Its subcellular location is the cell membrane. It carries out the reaction ATP + H2O + 4 H(+)(in) = ADP + phosphate + 5 H(+)(out). Functionally, produces ATP from ADP in the presence of a proton gradient across the membrane. The alpha chain is a regulatory subunit. This chain is ATP synthase subunit alpha, found in Lactobacillus johnsonii (strain CNCM I-12250 / La1 / NCC 533).